The primary structure comprises 418 residues: Actin-related protein 3 (418 aa).

The protein belongs to the actin family. ARP3 subfamily. Component of the Arp2/3 complex composed of actr2/arp2, actr3/arp3, arpc1b, arpc2, arpc3, arpc4 and arpc5.

Its subcellular location is the cytoplasm. The protein resides in the cytoskeleton. The protein localises to the cell projection. It localises to the nucleus. Functionally, ATP-binding component of the Arp2/3 complex, a multiprotein complex that mediates actin polymerization upon stimulation by nucleation-promoting factor (NPF). The Arp2/3 complex mediates the formation of branched actin networks in the cytoplasm, providing the force for cell motility. Seems to contact the pointed end of the daughter actin filament. In addition to its role in the cytoplasmic cytoskeleton, the Arp2/3 complex also promotes actin polymerization in the nucleus, thereby regulating gene transcription and repair of damaged DNA. The Arp2/3 complex promotes homologous recombination (HR) repair in response to DNA damage by promoting nuclear actin polymerization, leading to drive motility of double-strand breaks (DSBs). The polypeptide is Actin-related protein 3 (actr3) (Takifugu rubripes (Japanese pufferfish)).